A 505-amino-acid chain; its full sequence is MSTRTARSLGPDLVLAGTVAKRAEILVVGLTSGPDGPEIALSEGIVAEDVLAEILDSLIAVGATGKPEQLTRVPAPSALSVTSVLAVGLGSADKLDSEQIRKSAGAAARSLSGIDTVATTLSILDLGAAAEGFALGAYSFTEFKSSMTAPGPDSQPLARVELLVPSPRTKETKATLARSAAIAEAVATAREFVNTPPSHLYPAEFAARAKALGVEAGLTVQVLDEKALEKGGYGGIIGVGKGSSRQPRLVRLEYASKKRGARKVALVGKGITFDTGGISIKPAAGMENMTSDMGGAAAVISTVVLAAKLGLPVNVVAYVPMAENMPSATAQRPGDVLTQYGGITIEVVNTDAEGRLILADAMVRAGEDNPDYMIDTATLTGAQMVALGNRTPGVMGTDEFRDRVASISQSVGENGWAMPLPEELRGDLDSKVADMANVTPHRWGGMLVAAHYLKEFVPEGVQWAHIDVAGPAYNTSGPWGYTGKGGTGVPVRTMISVLEDIAVNG.

Residues lysine 269 and aspartate 274 each coordinate Mn(2+). Lysine 281 is a catalytic residue. 3 residues coordinate Mn(2+): aspartate 292, aspartate 351, and glutamate 353. Arginine 355 is an active-site residue.

The protein belongs to the peptidase M17 family. Mn(2+) serves as cofactor.

It localises to the cytoplasm. It carries out the reaction Release of an N-terminal amino acid, Xaa-|-Yaa-, in which Xaa is preferably Leu, but may be other amino acids including Pro although not Arg or Lys, and Yaa may be Pro. Amino acid amides and methyl esters are also readily hydrolyzed, but rates on arylamides are exceedingly low.. It catalyses the reaction Release of an N-terminal amino acid, preferentially leucine, but not glutamic or aspartic acids.. Presumably involved in the processing and regular turnover of intracellular proteins. Catalyzes the removal of unsubstituted N-terminal amino acids from various peptides. In Rhodococcus erythropolis (strain PR4 / NBRC 100887), this protein is Probable cytosol aminopeptidase.